We begin with the raw amino-acid sequence, 67 residues long: Large ribosomal subunit protein uL29 (67 aa).

Belongs to the universal ribosomal protein uL29 family.

The polypeptide is Large ribosomal subunit protein uL29 (Agathobacter rectalis (strain ATCC 33656 / DSM 3377 / JCM 17463 / KCTC 5835 / VPI 0990) (Eubacterium rectale)).